A 204-amino-acid chain; its full sequence is LVSESNPGRAIPAGGKGATIRAARPGLATTLNGPKAGNGTTGATKLTTPARPLSEGANMMCDHRAGGNAAISGSSVGEGTARAGDSKVMSRMLSPKGSIIAGTVNMMPADIAAGSVRTPSSLPPDGRSATPMSVSEVASDISHKDGSVNVTKDPVTAAGLTAMRKNANKGSPPASPLPLKADNKGVHINKHWVDLKNDNDFNTR.

As to quaternary structure, multimer.

It localises to the secreted. The enzyme catalyses Eliminative cleavage of beta-D-glucopyranosyl-(1-&gt;4)-beta-D-glucopyranosyluronate bonds of gellan backbone releasing tetrasaccharides containing a 4-deoxy-4,5-unsaturated D-glucopyranosyluronic acid at the non-reducing end. The tetrasaccharide produced from deacetylated gellan is beta-D-4-deoxy-Delta(4)-GlcAp-(1-&gt;4)-beta-D-Glcp-(1-&gt;4)-alpha-L-Rhap-(1-&gt;3)-beta-D-Glcp.. With respect to regulation, activity is stimulated by zinc, potassium, lithium, cobalt, sodium, calcium, iron, manganase, magnesium and mercury ions at a concentration of 1 mM, but inhibited by copper ions at a concentration of 1 mM. Activity is inhibited by potassium, sodium and magnesium ions at a concentration of 1 M. Activity is inhibited by urea, EDTA, dithiothreitol, p-CMB, PSF, natrium lauryl sulfate and N-bromosuccinimide. Functionally, cleaves the glycosidic bonds of gellan backbone and releases tetrasaccharide units of glucuronyl-glucosyl-rhamnosyl-glucose with unsaturated glucuronic acid at the non-reducing terminal. The enzyme is highly specific to the heteropolysaccharide gellan. In Geobacillus stearothermophilus (Bacillus stearothermophilus), this protein is Gellan lyase.